The sequence spans 114 residues: Non-specific lipid-transfer protein 2 (114 aa).

The first 23 residues, 1-23 (MEMVNKIACFVLLCMVVVAPHAE), serve as a signal peptide directing secretion. 4 disulfides stabilise this stretch: Cys-27–Cys-73, Cys-37–Cys-50, Cys-51–Cys-96, and Cys-71–Cys-110.

This sequence belongs to the plant LTP family.

Functionally, plant non-specific lipid-transfer proteins transfer phospholipids as well as galactolipids across membranes. May play a role in wax or cutin deposition in the cell walls of expanding epidermal cells and certain secretory tissues. This chain is Non-specific lipid-transfer protein 2 (LTP2), found in Solanum pennellii (Tomato).